Consider the following 501-residue polypeptide: Endoglucanase 8 (501 aa).

The N-terminal stretch at 1-35 (MKPRSSRDGHNAAAAAALLLAALVLSGDVLPAVVA) is a signal peptide. The active-site Nucleophile is aspartate 95. N-linked (GlcNAc...) asparagine glycosylation occurs at asparagine 298. Histidine 414 is a catalytic residue. N-linked (GlcNAc...) asparagine glycosylation occurs at asparagine 462. Residue aspartate 465 is part of the active site. N-linked (GlcNAc...) asparagine glycosylation occurs at asparagine 469. Glutamate 474 is an active-site residue.

This sequence belongs to the glycosyl hydrolase 9 (cellulase E) family.

It is found in the secreted. The enzyme catalyses Endohydrolysis of (1-&gt;4)-beta-D-glucosidic linkages in cellulose, lichenin and cereal beta-D-glucans.. In Oryza sativa subsp. japonica (Rice), this protein is Endoglucanase 8.